The primary structure comprises 156 residues: Ribonuclease P protein component (156 aa).

Positions 126 to 156 (GLRKLGVTPGGGRSPAPRAHSGARPRTDARS) are disordered.

This sequence belongs to the RnpA family. Consists of a catalytic RNA component (M1 or rnpB) and a protein subunit.

It catalyses the reaction Endonucleolytic cleavage of RNA, removing 5'-extranucleotides from tRNA precursor.. In terms of biological role, RNaseP catalyzes the removal of the 5'-leader sequence from pre-tRNA to produce the mature 5'-terminus. It can also cleave other RNA substrates such as 4.5S RNA. The protein component plays an auxiliary but essential role in vivo by binding to the 5'-leader sequence and broadening the substrate specificity of the ribozyme. This is Ribonuclease P protein component from Nocardia farcinica (strain IFM 10152).